The primary structure comprises 378 residues: Cysteine endopeptidase RepA (378 aa).

An N-terminal signal peptide occupies residues 1–24; that stretch reads MLRCFLVAAAAVALAAAAAAPARA. A propeptide spans 25–141 (activation peptide); that stretch reads IPFTESDLSS…SFRYGGDDED (117 aa). 3 disulfide bridges follow: Cys164–Cys206, Cys198–Cys239, and Cys297–Cys350. Residue Cys167 is part of the active site. Active-site residues include His303 and Asn324.

The protein belongs to the peptidase C1 family.

The protein localises to the protein storage vacuole. Functionally, cysteine endopeptidase that digests in vitro both the acidic and basic subunits of glutelin, the major seed storage protein of rice. The polypeptide is Cysteine endopeptidase RepA (Oryza sativa subsp. japonica (Rice)).